We begin with the raw amino-acid sequence, 108 residues long: Protein ORFa in retron Ec67 (108 aa).

This chain is Protein ORFa in retron Ec67, found in Escherichia coli.